The following is a 547-amino-acid chain: Chaperonin GroEL (547 aa).

ATP is bound by residues 30–33 (TLGP), Lys-51, 87–91 (DGTTT), Gly-415, and Asp-496.

This sequence belongs to the chaperonin (HSP60) family. As to quaternary structure, forms a cylinder of 14 subunits composed of two heptameric rings stacked back-to-back. Interacts with the co-chaperonin GroES.

Its subcellular location is the cytoplasm. The enzyme catalyses ATP + H2O + a folded polypeptide = ADP + phosphate + an unfolded polypeptide.. Functionally, together with its co-chaperonin GroES, plays an essential role in assisting protein folding. The GroEL-GroES system forms a nano-cage that allows encapsulation of the non-native substrate proteins and provides a physical environment optimized to promote and accelerate protein folding. The sequence is that of Chaperonin GroEL from Actinobacillus succinogenes (strain ATCC 55618 / DSM 22257 / CCUG 43843 / 130Z).